Reading from the N-terminus, the 328-residue chain is Ribosomal RNA small subunit methyltransferase H (328 aa).

Residues 35 to 37 (GSH), Asp-60, Phe-87, Asp-113, and Gln-120 each bind S-adenosyl-L-methionine.

The protein belongs to the methyltransferase superfamily. RsmH family.

The protein localises to the cytoplasm. It catalyses the reaction cytidine(1402) in 16S rRNA + S-adenosyl-L-methionine = N(4)-methylcytidine(1402) in 16S rRNA + S-adenosyl-L-homocysteine + H(+). Its function is as follows. Specifically methylates the N4 position of cytidine in position 1402 (C1402) of 16S rRNA. In Chlorobium chlorochromatii (strain CaD3), this protein is Ribosomal RNA small subunit methyltransferase H.